The chain runs to 83 residues: Small ribosomal subunit protein uS17 (83 aa).

Belongs to the universal ribosomal protein uS17 family. In terms of assembly, part of the 30S ribosomal subunit.

Functionally, one of the primary rRNA binding proteins, it binds specifically to the 5'-end of 16S ribosomal RNA. This is Small ribosomal subunit protein uS17 from Francisella philomiragia subsp. philomiragia (strain ATCC 25017 / CCUG 19701 / FSC 153 / O#319-036).